Here is a 122-residue protein sequence, read N- to C-terminus: Large ribosomal subunit protein uL14 (122 aa).

The protein belongs to the universal ribosomal protein uL14 family. Part of the 50S ribosomal subunit. Forms a cluster with proteins L3 and L19. In the 70S ribosome, L14 and L19 interact and together make contacts with the 16S rRNA in bridges B5 and B8.

In terms of biological role, binds to 23S rRNA. Forms part of two intersubunit bridges in the 70S ribosome. In Paraburkholderia phytofirmans (strain DSM 17436 / LMG 22146 / PsJN) (Burkholderia phytofirmans), this protein is Large ribosomal subunit protein uL14.